The following is a 364-amino-acid chain: CCA-adding enzyme (364 aa).

ATP contacts are provided by Gly19 and Arg22. CTP contacts are provided by Gly19 and Arg22. The Mg(2+) site is built by Asp32 and Asp34. 3 residues coordinate ATP: Arg102, Arg148, and Arg151. The CTP site is built by Arg102, Arg148, and Arg151.

The protein belongs to the tRNA nucleotidyltransferase/poly(A) polymerase family. Bacterial CCA-adding enzyme type 2 subfamily. It depends on Mg(2+) as a cofactor.

It catalyses the reaction a tRNA precursor + 2 CTP + ATP = a tRNA with a 3' CCA end + 3 diphosphate. It carries out the reaction a tRNA with a 3' CCA end + 2 CTP + ATP = a tRNA with a 3' CCACCA end + 3 diphosphate. Functionally, catalyzes the addition and repair of the essential 3'-terminal CCA sequence in tRNAs without using a nucleic acid template. Adds these three nucleotides in the order of C, C, and A to the tRNA nucleotide-73, using CTP and ATP as substrates and producing inorganic pyrophosphate. tRNA 3'-terminal CCA addition is required both for tRNA processing and repair. Also involved in tRNA surveillance by mediating tandem CCA addition to generate a CCACCA at the 3' terminus of unstable tRNAs. While stable tRNAs receive only 3'-terminal CCA, unstable tRNAs are marked with CCACCA and rapidly degraded. The protein is CCA-adding enzyme of Bordetella bronchiseptica (strain ATCC BAA-588 / NCTC 13252 / RB50) (Alcaligenes bronchisepticus).